Reading from the N-terminus, the 316-residue chain is Transaldolase A (316 aa).

K131 functions as the Schiff-base intermediate with substrate in the catalytic mechanism.

This sequence belongs to the transaldolase family. Type 1 subfamily. In terms of assembly, homodimer.

Its subcellular location is the cytoplasm. It catalyses the reaction D-sedoheptulose 7-phosphate + D-glyceraldehyde 3-phosphate = D-erythrose 4-phosphate + beta-D-fructose 6-phosphate. Its pathway is carbohydrate degradation; pentose phosphate pathway; D-glyceraldehyde 3-phosphate and beta-D-fructose 6-phosphate from D-ribose 5-phosphate and D-xylulose 5-phosphate (non-oxidative stage): step 2/3. Its function is as follows. Transaldolase is important for the balance of metabolites in the pentose-phosphate pathway. The chain is Transaldolase A from Salmonella typhimurium (strain LT2 / SGSC1412 / ATCC 700720).